The following is a 710-amino-acid chain: mRNA export factor crp79 (710 aa).

RRM domains are found at residues 19–102 (IYVG…KLTI) and 222–292 (HFKQ…PTTP). Residues 333–348 (QWGSVSTTGVSNQQNH) are compositionally biased toward polar residues. Residues 333 to 357 (QWGSVSTTGVSNQQNHPAAWNPDNK) form a disordered region. The 74-residue stretch at 401-474 (EDLFSPFGSI…DRIRRLQAFF (74 aa)) folds into the RRM 3 domain. Over residues 502 to 524 (TIRKPIESSTNKISENPTTLSSK) the composition is skewed to polar residues. Residues 502 to 544 (TIRKPIESSTNKISENPTTLSSKVENKNEPKTGENKEPSQTNE) are disordered. A compositionally biased stretch (basic and acidic residues) spans 525–538 (VENKNEPKTGENKE).

The protein localises to the cytoplasm. The protein resides in the nucleus. Functionally, binds the poly(A) tail of mRNA. Involved in the export of mRNA from the nucleus to the cytoplasm. The polypeptide is mRNA export factor crp79 (crp79) (Schizosaccharomyces pombe (strain 972 / ATCC 24843) (Fission yeast)).